A 116-amino-acid polypeptide reads, in one-letter code: MERRKATVHVGNLAPSVTESLLYNAFIPFGEIISVALHRKEKAVDRSYAFVEFDEPEDAKEAMENMNYSILCDRCIRVSPANFALSAEETAVPDIAMLHPESADFQTFKSTSTPTS.

Positions 6–83 constitute an RRM domain; that stretch reads ATVHVGNLAP…RCIRVSPANF (78 aa).

It is found in the cytoplasm. The protein resides in the nucleus. This is an uncharacterized protein from Schizosaccharomyces pombe (strain 972 / ATCC 24843) (Fission yeast).